A 304-amino-acid polypeptide reads, in one-letter code: MTTEQEFEKVELTADGGVIKTILKKGDEGEENIPKKGNEVTVHYVGKLESTGKVFDSSFDRNVPFKFHLEQGEVIKGWDICVSSMRKNEKCLVRIESMYGYGDEGCGESIPGNSVLLFEIELLSFREAKKSIYDYTDEEKVQSAFDIKEEGNEFFKKNEINEAIVKYKEALDFFIHTEEWDDQILLDKKKNIEISCNLNLATCYNKNKDYPKAIDHASKVLKIDKNNVKALYKLGVANMYFGFLEEAKENLYKAASLNPNNLDIRNSYELCVNKLKEARKKDKLTFGGMFDKGPLYEEKKNSAN.

A PPIase FKBP-type domain is found at 37-126 (GNEVTVHYVG…LFEIELLSFR (90 aa)). TPR repeat units follow at residues 144-177 (AFDI…FIHT), 194-227 (ISCN…DKNN), and 228-261 (VKAL…NPNN).

It belongs to the FKBP-type PPIase family. In terms of assembly, homodimer. Interacts (via TPR repeats) with HSP90 (probably via MEEVD motif).

The protein localises to the cytoplasm. It localises to the nucleus. It carries out the reaction [protein]-peptidylproline (omega=180) = [protein]-peptidylproline (omega=0). With respect to regulation, inhibited by FK506 and its derivates, such as ascomycin, and rapamycin. FK506 and rapamycin inhibit peptidylprolyl isomerase activity but not chaperone activity. Inhibited by N-(2-ethyl-phenyl)-2-(3H-imidazao [4, 5-b] pyridin-2-yl-sulfanyl)-acetamide (D44). Not inhibited by cyclosporin A. Inhibition of calcineurin phosphatase activity is enhanced by FK506. In terms of biological role, has peptidylprolyl isomerase (PPIase) and co-chaperone activities. Assists protein folding by catalyzing the peptidyl conversion of cis and trans rotamers of the prolyl amide bond of protein substrates. Inhibits calcineurin phosphatase activity in vitro. Plays an essential role in merozoite egress from host erythrocytes. The chain is Peptidyl-prolyl cis-trans isomerase FKBP35 from Plasmodium falciparum (isolate 3D7).